A 407-amino-acid chain; its full sequence is Elongation factor Tu (407 aa).

Positions Lys10–Glu217 constitute a tr-type G domain. The interval Gly19–Thr26 is G1. Gly19–Thr26 provides a ligand contact to GTP. Thr26 is a Mg(2+) binding site. The segment at Gly60–Ala64 is G2. The segment at Asp81–Gly84 is G3. Residues Asp81 to His85 and Asn136 to Asp139 each bind GTP. The G4 stretch occupies residues Asn136–Asp139. Residues Ser184–Leu186 form a G5 region.

It belongs to the TRAFAC class translation factor GTPase superfamily. Classic translation factor GTPase family. EF-Tu/EF-1A subfamily. As to quaternary structure, monomer.

The protein resides in the cytoplasm. The enzyme catalyses GTP + H2O = GDP + phosphate + H(+). In terms of biological role, GTP hydrolase that promotes the GTP-dependent binding of aminoacyl-tRNA to the A-site of ribosomes during protein biosynthesis. This chain is Elongation factor Tu, found in Teredinibacter turnerae (strain ATCC 39867 / T7901).